The chain runs to 466 residues: Cysteine--tRNA ligase (466 aa).

A Zn(2+)-binding site is contributed by cysteine 28. A 'HIGH' region motif is present at residues 30–40 (PTVYNYIHIGN). Zn(2+)-binding residues include cysteine 208, histidine 233, and glutamate 237. Positions 265–269 (KMSKS) match the 'KMSKS' region motif. Lysine 268 contributes to the ATP binding site.

It belongs to the class-I aminoacyl-tRNA synthetase family. In terms of assembly, monomer. It depends on Zn(2+) as a cofactor.

Its subcellular location is the cytoplasm. The enzyme catalyses tRNA(Cys) + L-cysteine + ATP = L-cysteinyl-tRNA(Cys) + AMP + diphosphate. The protein is Cysteine--tRNA ligase of Staphylococcus aureus (strain MRSA252).